The primary structure comprises 33 residues: Brevinin-2PTe (33 aa).

The cysteines at positions 27 and 33 are disulfide-linked.

In terms of tissue distribution, expressed by the skin glands.

Its subcellular location is the secreted. Functionally, has antibacterial activity against the Gram-positive bacterium S.aureus ATCC 25923 (MIC=36 uM) and the Gram-negative bacterium E.coli ATCC 25726 (MIC=18 uM). This is Brevinin-2PTe from Pulchrana picturata (Malaysian fire frog).